The sequence spans 346 residues: fMet-Leu-Phe receptor (346 aa).

N-linked (GlcNAc...) asparagine glycosylation is found at Asn-1 and Asn-7. Topologically, residues 1-24 (NSSLPTNISGGTPAVSAGYLFLDI) are extracellular. A helical membrane pass occupies residues 25 to 47 (ITYLVFAVTFVLGVLGNGLVIWV). Topologically, residues 48–58 (AGFRMRHTVTT) are cytoplasmic. The chain crosses the membrane as a helical span at residues 59-80 (ISYLNLAVADFCFTSTLPFLMV). Over 81 to 97 (VKVMRGHWPFGWFLCKF) the chain is Extracellular. A disulfide bridge links Cys-95 with Cys-173. Residues 98-118 (IFTIVDINLFGSVFLIALIAL) form a helical membrane-spanning segment. At 119–137 (DRCVCVLHPVWTQNHRTVS) the chain is on the cytoplasmic side. The chain crosses the membrane as a helical span at residues 138 to 159 (LAKKVIIGPWVMALLLTLPVII). Residues 160-202 (RVTTVPGKTGTVACTFDFSPWTNDPVEKLKVTIAMLTVRGIIR) are Extracellular-facing. A helical transmembrane segment spans residues 203–223 (FIIGFSVPMSIVAVSYGLIAT). Residues 224 to 239 (KIHKQGLIKSSRPLRV) lie on the Cytoplasmic side of the membrane. Residues 240-263 (LSFVVAAFFLCWSPYQVVAFIATV) form a helical membrane-spanning segment. Topologically, residues 264–282 (RLRNILQGLSKELRIAVDA) are extracellular. Residues 283–302 (TSALAFFNSCLNPMLYVFMG) traverse the membrane as a helical segment. The Cytoplasmic portion of the chain corresponds to 303–346 (QDFRERLIHSLPTSLERALTEDSAQTSDTATNSTLPSAEVPLQA). A disordered region spans residues 321–346 (LTEDSAQTSDTATNSTLPSAEVPLQA). Over residues 324 to 338 (DSAQTSDTATNSTLP) the composition is skewed to polar residues.

It belongs to the G-protein coupled receptor 1 family. In terms of processing, phosphorylated; which is necessary for desensitization.

Its subcellular location is the cell membrane. In terms of biological role, high affinity receptor for N-formyl-methionyl peptides (fMLP), which are powerful neutrophil chemotactic factors. Binding of fMLP to the receptor stimulates intracellular calcium mobilization and superoxide anion release. This response is mediated via a G-protein that activates a phosphatidylinositol-calcium second messenger system. Receptor for TAFA4, mediates its effects on chemoattracting macrophages, promoting phagocytosis and increasing ROS release. Receptor for cathepsin CTSG, leading to increased phagocyte chemotaxis. The polypeptide is fMet-Leu-Phe receptor (FPR1) (Macaca mulatta (Rhesus macaque)).